The following is a 340-amino-acid chain: DNA-directed RNA polymerase subunit alpha (340 aa).

Residues methionine 1 to glutamate 233 are alpha N-terminal domain (alpha-NTD). The interval alanine 264–serine 340 is alpha C-terminal domain (alpha-CTD).

The protein belongs to the RNA polymerase alpha chain family. In terms of assembly, in plastids the minimal PEP RNA polymerase catalytic core is composed of four subunits: alpha, beta, beta', and beta''. When a (nuclear-encoded) sigma factor is associated with the core the holoenzyme is formed, which can initiate transcription.

The protein localises to the plastid. The protein resides in the chloroplast. It carries out the reaction RNA(n) + a ribonucleoside 5'-triphosphate = RNA(n+1) + diphosphate. DNA-dependent RNA polymerase catalyzes the transcription of DNA into RNA using the four ribonucleoside triphosphates as substrates. This Psilotum nudum (Whisk fern) protein is DNA-directed RNA polymerase subunit alpha.